The primary structure comprises 78 residues: MLVLLQAVCITVLTLLLIGRLQLLERLLLNHSFNLKTVDDFNILYRSLAETRLLKVVLRLIFLVLLGFCCYRLLVILM.

The first 23 residues, 1-23 (MLVLLQAVCITVLTLLLIGRLQL), serve as a signal peptide directing secretion. Residues 56-76 (VVLRLIFLVLLGFCCYRLLVI) traverse the membrane as a helical segment.

This sequence belongs to the coronaviruses ns7/ns7a protein family.

Its subcellular location is the host membrane. In terms of biological role, may function in the formation of membrane-bound replication complexes or in the assembly of the virus. The chain is Non-structural protein 7 from Porcine respiratory coronavirus (strain 86/137004 / isolate British) (PRCoV).